We begin with the raw amino-acid sequence, 149 residues long: MIKIDVKIIDPRMADQLPAYATPGSAGLDLRACLDAPLTLLPNAWQLVPTGIAIYLKDPKFAAMILPRSGLGHKHGIVLGNLVGLIDSDYQGQLMVSAWNRSDVAFTIEPMERIAQLVIVPVLQAQFNVVSEFPASARGEGGYGSTGKG.

Substrate contacts are provided by residues 68-70, N81, 85-87, and M95; these read RSG and LID.

This sequence belongs to the dUTPase family. Requires Mg(2+) as cofactor.

It carries out the reaction dUTP + H2O = dUMP + diphosphate + H(+). It participates in pyrimidine metabolism; dUMP biosynthesis; dUMP from dCTP (dUTP route): step 2/2. This enzyme is involved in nucleotide metabolism: it produces dUMP, the immediate precursor of thymidine nucleotides and it decreases the intracellular concentration of dUTP so that uracil cannot be incorporated into DNA. This chain is Deoxyuridine 5'-triphosphate nucleotidohydrolase, found in Albidiferax ferrireducens (strain ATCC BAA-621 / DSM 15236 / T118) (Rhodoferax ferrireducens).